The chain runs to 426 residues: Endoglucanase (426 aa).

Residues 1-19 (MRRCMPLVAASVAALMLAG) form the signal peptide. C20 carries N-palmitoyl cysteine lipidation. C20 carries the S-diacylglycerol cysteine lipid modification. Positions 20-45 (CGGGDGDPSLSTASVSATDTTTLKPA) are excised as a propeptide. Catalysis depends on E249, which acts as the Proton donor. The active-site Nucleophile is the E361.

It belongs to the glycosyl hydrolase 5 (cellulase A) family.

Its subcellular location is the cell membrane. It catalyses the reaction Endohydrolysis of (1-&gt;4)-beta-D-glucosidic linkages in cellulose, lichenin and cereal beta-D-glucans.. In Ralstonia solanacearum (Pseudomonas solanacearum), this protein is Endoglucanase (egl).